A 366-amino-acid polypeptide reads, in one-letter code: Phospho-N-acetylmuramoyl-pentapeptide-transferase (366 aa).

The next 10 helical transmembrane spans lie at 27–47 (AAMF…IASL), 71–91 (TPTM…LLWA), 93–113 (LSNV…AIGF), 134–154 (LAIE…AAKI), 174–194 (ALLN…VSAG), 205–225 (GLAI…AYLA), 245–265 (LAVI…FNAP), 268–288 (AIFM…TVAV), 294–314 (IVMV…IIQV), and 343–363 (QVVI…LATL).

It belongs to the glycosyltransferase 4 family. MraY subfamily. The cofactor is Mg(2+).

The protein localises to the cell inner membrane. The catalysed reaction is UDP-N-acetyl-alpha-D-muramoyl-L-alanyl-gamma-D-glutamyl-meso-2,6-diaminopimeloyl-D-alanyl-D-alanine + di-trans,octa-cis-undecaprenyl phosphate = di-trans,octa-cis-undecaprenyl diphospho-N-acetyl-alpha-D-muramoyl-L-alanyl-D-glutamyl-meso-2,6-diaminopimeloyl-D-alanyl-D-alanine + UMP. It functions in the pathway cell wall biogenesis; peptidoglycan biosynthesis. Its function is as follows. Catalyzes the initial step of the lipid cycle reactions in the biosynthesis of the cell wall peptidoglycan: transfers peptidoglycan precursor phospho-MurNAc-pentapeptide from UDP-MurNAc-pentapeptide onto the lipid carrier undecaprenyl phosphate, yielding undecaprenyl-pyrophosphoryl-MurNAc-pentapeptide, known as lipid I. The protein is Phospho-N-acetylmuramoyl-pentapeptide-transferase of Allorhizobium ampelinum (strain ATCC BAA-846 / DSM 112012 / S4) (Agrobacterium vitis (strain S4)).